A 243-amino-acid polypeptide reads, in one-letter code: Probable septum site-determining protein MinC (243 aa).

Belongs to the MinC family. As to quaternary structure, interacts with MinD and FtsZ.

Functionally, cell division inhibitor that blocks the formation of polar Z ring septums. Rapidly oscillates between the poles of the cell to destabilize FtsZ filaments that have formed before they mature into polar Z rings. Prevents FtsZ polymerization. In Wigglesworthia glossinidia brevipalpis, this protein is Probable septum site-determining protein MinC.